We begin with the raw amino-acid sequence, 298 residues long: N-acetylmuramic acid 6-phosphate etherase (298 aa).

The SIS domain maps to 57-220 (IAAAFGKGGR…STGAMIRTGK (164 aa)). The active-site Proton donor is glutamate 85. The active site involves glutamate 116.

It belongs to the GCKR-like family. MurNAc-6-P etherase subfamily. As to quaternary structure, homodimer.

It catalyses the reaction N-acetyl-D-muramate 6-phosphate + H2O = N-acetyl-D-glucosamine 6-phosphate + (R)-lactate. It participates in amino-sugar metabolism; 1,6-anhydro-N-acetylmuramate degradation. The protein operates within amino-sugar metabolism; N-acetylmuramate degradation. Its pathway is cell wall biogenesis; peptidoglycan recycling. In terms of biological role, specifically catalyzes the cleavage of the D-lactyl ether substituent of MurNAc 6-phosphate, producing GlcNAc 6-phosphate and D-lactate. Together with AnmK, is also required for the utilization of anhydro-N-acetylmuramic acid (anhMurNAc) either imported from the medium or derived from its own cell wall murein, and thus plays a role in cell wall recycling. The polypeptide is N-acetylmuramic acid 6-phosphate etherase (Aeromonas hydrophila subsp. hydrophila (strain ATCC 7966 / DSM 30187 / BCRC 13018 / CCUG 14551 / JCM 1027 / KCTC 2358 / NCIMB 9240 / NCTC 8049)).